Reading from the N-terminus, the 467-residue chain is Tyrosine phenol-lyase (467 aa).

An N6-(pyridoxal phosphate)lysine modification is found at K268.

It belongs to the beta-eliminating lyase family. In terms of assembly, homotetramer. The cofactor is pyridoxal 5'-phosphate.

The catalysed reaction is L-tyrosine + H2O = phenol + pyruvate + NH4(+). The polypeptide is Tyrosine phenol-lyase (Nostoc punctiforme (strain ATCC 29133 / PCC 73102)).